A 352-amino-acid polypeptide reads, in one-letter code: Glutamine synthetase (352 aa).

One can recognise a GS beta-grasp domain in the interval 3–82; sequence YQAEYIWIDG…LCEVQLTDFT (80 aa). The GS catalytic domain occupies 87–352; the sequence is TRAAALGVAE…TTPAPAEASV (266 aa). Residues E108 and E110 each coordinate Mg(2+). Residue E164 participates in ATP binding. Mg(2+) is bound by residues E169 and E176. Position 272 (E272) interacts with L-glutamate.

It belongs to the glutamine synthetase family. As to quaternary structure, homooctamer and homotetramer. Mg(2+) serves as cofactor.

It localises to the cytoplasm. It carries out the reaction L-glutamate + NH4(+) + ATP = L-glutamine + ADP + phosphate + H(+). Its function is as follows. Catalyzes the ATP-dependent biosynthesis of glutamine from glutamate and ammonia. In Frankia alni, this protein is Glutamine synthetase.